Reading from the N-terminus, the 278-residue chain is Urease accessory protein UreD (278 aa).

This sequence belongs to the UreD family. In terms of assembly, ureD, UreF and UreG form a complex that acts as a GTP-hydrolysis-dependent molecular chaperone, activating the urease apoprotein by helping to assemble the nickel containing metallocenter of UreC. The UreE protein probably delivers the nickel.

It localises to the cytoplasm. Required for maturation of urease via the functional incorporation of the urease nickel metallocenter. In Staphylococcus epidermidis (strain ATCC 12228 / FDA PCI 1200), this protein is Urease accessory protein UreD.